A 319-amino-acid polypeptide reads, in one-letter code: Ribonucleoside-diphosphate reductase small chain (319 aa).

The Fe cation site is built by aspartate 70, glutamate 101, and histidine 104. The active site involves tyrosine 108. Fe cation-binding residues include glutamate 163, glutamate 197, and histidine 200. The segment at 313-319 is interaction with R1; sequence FSLDVDF.

The protein belongs to the ribonucleoside diphosphate reductase small chain family. In terms of assembly, interacts with RNR1/OPG080 subunit. Can interact with host RNR1 supunit. Requires Fe cation as cofactor.

It catalyses the reaction a 2'-deoxyribonucleoside 5'-diphosphate + [thioredoxin]-disulfide + H2O = a ribonucleoside 5'-diphosphate + [thioredoxin]-dithiol. Functionally, ribonucleoside-diphosphate reductase holoenzyme provides the precursors necessary for viral DNA synthesis. Allows virus growth in non-dividing cells. Catalyzes the biosynthesis of deoxyribonucleotides from the corresponding ribonucleotides. In Vaccinia virus (strain L-IVP) (VACV), this protein is Ribonucleoside-diphosphate reductase small chain (OPG048).